The following is a 340-amino-acid chain: DNA-directed RNA polymerase subunit alpha (340 aa).

Positions 1 to 236 (MLSLSKNWNT…EQLQLFISFE (236 aa)) are alpha N-terminal domain (alpha-NTD). The segment at 251 to 340 (FSPYLLKRVD…LSKRYEDSYN (90 aa)) is alpha C-terminal domain (alpha-CTD).

The protein belongs to the RNA polymerase alpha chain family. Homodimer. The RNAP catalytic core consists of 2 alpha, 1 beta, 1 beta' and 1 omega subunit. When a sigma factor is associated with the core the holoenzyme is formed, which can initiate transcription.

The catalysed reaction is RNA(n) + a ribonucleoside 5'-triphosphate = RNA(n+1) + diphosphate. Its function is as follows. DNA-dependent RNA polymerase catalyzes the transcription of DNA into RNA using the four ribonucleoside triphosphates as substrates. In Rickettsia rickettsii (strain Iowa), this protein is DNA-directed RNA polymerase subunit alpha.